A 236-amino-acid polypeptide reads, in one-letter code: MRLGVNVDHVATVRQARRTFEPSPVCAALIAQQAGADQITLHLREDRRHIQDRDLELIKELVNIPVNLEMAPTEEMREIALRVRPDRITLVPERREEITTEGGLDVVSMKERLKEYLKPLKEAGIEISLFIEPDKEQIEASRDVGADAIEIHTGRYQPLERHRFEEAREELRRIREAAIYARERGLRVYAGHGLTYHNVKEFVRELKDVVEELNIGHSIVANAVIFGFERAVKEMI.

3-amino-2-oxopropyl phosphate is bound at residue Asn-6. Residue 8-9 coordinates 1-deoxy-D-xylulose 5-phosphate; that stretch reads DH. Position 17 (Arg-17) interacts with 3-amino-2-oxopropyl phosphate. Residue His-42 is the Proton acceptor of the active site. 1-deoxy-D-xylulose 5-phosphate-binding residues include Arg-44 and His-49. Residue Glu-69 is the Proton acceptor of the active site. Thr-99 serves as a coordination point for 1-deoxy-D-xylulose 5-phosphate. His-192 acts as the Proton donor in catalysis. 3-amino-2-oxopropyl phosphate-binding positions include Gly-193 and 216 to 217; that span reads GH.

It belongs to the PNP synthase family. In terms of assembly, homooctamer; tetramer of dimers.

It localises to the cytoplasm. It carries out the reaction 3-amino-2-oxopropyl phosphate + 1-deoxy-D-xylulose 5-phosphate = pyridoxine 5'-phosphate + phosphate + 2 H2O + H(+). The protein operates within cofactor biosynthesis; pyridoxine 5'-phosphate biosynthesis; pyridoxine 5'-phosphate from D-erythrose 4-phosphate: step 5/5. Its function is as follows. Catalyzes the complicated ring closure reaction between the two acyclic compounds 1-deoxy-D-xylulose-5-phosphate (DXP) and 3-amino-2-oxopropyl phosphate (1-amino-acetone-3-phosphate or AAP) to form pyridoxine 5'-phosphate (PNP) and inorganic phosphate. This chain is Pyridoxine 5'-phosphate synthase, found in Aquifex pyrophilus.